The sequence spans 279 residues: Methyltransferase ausD (279 aa).

Residues 124-125 (DI) and 152-153 (DV) each bind S-adenosyl-L-methionine.

This sequence belongs to the class I-like SAM-binding methyltransferase superfamily. In terms of assembly, homodimer.

Its pathway is secondary metabolite biosynthesis; terpenoid biosynthesis. Functionally, methyltransferase; part of the gene cluster A that mediates the biosynthesis of the fungal meroterpenoid acetoxydehydroaustin. The first step of the pathway is the synthesis of 3,5-dimethylorsellinic acid by the polyketide synthase ausA. 3,5-dimethylorsellinic acid is then prenylated by the polyprenyl transferase ausN. Further epoxidation by the FAD-dependent monooxygenase ausM and cyclization by the probable terpene cyclase ausL lead to the formation of protoaustinoid A. Protoaustinoid A is then oxidized to spiro-lactone preaustinoid A3 by the combined action of the FAD-binding monooxygenases ausB and ausC, and the dioxygenase ausE. Acid-catalyzed keto-rearrangement and ring contraction of the tetraketide portion of preaustinoid A3 by ausJ lead to the formation of preaustinoid A4. The aldo-keto reductase ausK, with the help of ausH, is involved in the next step by transforming preaustinoid A4 into isoaustinone which is in turn hydroxylated by the P450 monooxygenase ausI to form austinolide. The cytochrome P450 monooxygenase ausG then modifies austinolide to austinol. Austinol is further acetylated to austin by the O-acetyltransferase ausP, which spontaneously changes to dehydroaustin. The cytochrome P450 monooxygenase then converts dehydroaustin is into 7-dehydrodehydroaustin. The hydroxylation catalyzed by ausR permits the second O-acetyltransferase ausQ to add an additional acetyl group to the molecule, leading to the formation of acetoxydehydroaustin. Due to genetic rearrangements of the clusters and the subsequent loss of some enzymes, the end product of the Penicillium brasilianum austinoid biosynthesis clusters is acetoxydehydroaustin. The polypeptide is Methyltransferase ausD (Penicillium brasilianum).